Reading from the N-terminus, the 258-residue chain is Imidazole glycerol phosphate synthase subunit HisF (258 aa).

Residues Asp-11 and Asp-130 contribute to the active site.

Belongs to the HisA/HisF family. Heterodimer of HisH and HisF.

It localises to the cytoplasm. The enzyme catalyses 5-[(5-phospho-1-deoxy-D-ribulos-1-ylimino)methylamino]-1-(5-phospho-beta-D-ribosyl)imidazole-4-carboxamide + L-glutamine = D-erythro-1-(imidazol-4-yl)glycerol 3-phosphate + 5-amino-1-(5-phospho-beta-D-ribosyl)imidazole-4-carboxamide + L-glutamate + H(+). Its pathway is amino-acid biosynthesis; L-histidine biosynthesis; L-histidine from 5-phospho-alpha-D-ribose 1-diphosphate: step 5/9. Its function is as follows. IGPS catalyzes the conversion of PRFAR and glutamine to IGP, AICAR and glutamate. The HisF subunit catalyzes the cyclization activity that produces IGP and AICAR from PRFAR using the ammonia provided by the HisH subunit. This is Imidazole glycerol phosphate synthase subunit HisF from Bradyrhizobium sp. (strain BTAi1 / ATCC BAA-1182).